Reading from the N-terminus, the 468-residue chain is Protein maelstrom 2 (468 aa).

The segment at residues 2-69 (PPKKHSGFMM…LTRVKKERLN (68 aa)) is a DNA-binding region (HMG box). Positions 374–393 (KEDSPTVLSPASSRRSLASS) are disordered. A compositionally biased stretch (low complexity) spans 381 to 393 (LSPASSRRSLASS).

This sequence belongs to the maelstrom family.

Its subcellular location is the cytoplasm. It localises to the nucleus. Involved both in the piRNA and miRNA metabolic processes. As a component of the meiotic nuage, plays a central role during oogenesis by repressing transposable elements and preventing their mobilization, which is essential for the germline integrity. Repression of transposable elements is mediated via the piRNA metabolic process, which mediates the repression of transposable elements during meiosis by forming complexes composed of piRNAs and Piwi proteins and governs the repression of transposons. As a nuclear component, it is required for proper differentiation in the germline stem cell (GSC) lineage by repressing microRNA-7 (miR-7), thereby acting as an indirect regulator of bag-of-marbles (Bam). Acts by binding to the promoter of miR-7 gene and repressing its expression; miR-7 repression alleviates the Bam repression by miR-7, thereby allowing differentiation in the germline stem cell (GSC) lineage. The polypeptide is Protein maelstrom 2 (mael2) (Drosophila ananassae (Fruit fly)).